The primary structure comprises 274 residues: NADPH-dependent 7-cyano-7-deazaguanine reductase (274 aa).

Substrate is bound at residue 80 to 82; the sequence is VES. An NADPH-binding site is contributed by 82–83; sequence SK. C181 acts as the Thioimide intermediate in catalysis. The active-site Proton donor is D188. Substrate is bound at residue 220 to 221; it reads HE. 249–250 lines the NADPH pocket; it reads RG.

Belongs to the GTP cyclohydrolase I family. QueF type 2 subfamily. As to quaternary structure, homodimer.

The protein localises to the cytoplasm. The enzyme catalyses 7-aminomethyl-7-carbaguanine + 2 NADP(+) = 7-cyano-7-deazaguanine + 2 NADPH + 3 H(+). The protein operates within tRNA modification; tRNA-queuosine biosynthesis. Catalyzes the NADPH-dependent reduction of 7-cyano-7-deazaguanine (preQ0) to 7-aminomethyl-7-deazaguanine (preQ1). In Paraburkholderia phytofirmans (strain DSM 17436 / LMG 22146 / PsJN) (Burkholderia phytofirmans), this protein is NADPH-dependent 7-cyano-7-deazaguanine reductase.